The primary structure comprises 510 residues: NAD(P)H-quinone oxidoreductase subunit 2 B, chloroplastic (510 aa).

Helical transmembrane passes span 24–44 (LLLFDGSFIFPECILIFGLIL), 57–77 (IPWLYFISSTSLVMSITALLF), 99–119 (IFQFLILLCSTLCIPLSVEYI), 124–144 (MAITEFLLFVLTATLGGMFLC), 149–169 (LITIFVAPECFSLCSYLLSGY), 183–203 (YLLMGGASSSILVHAFSWLYG), 227–247 (PGISIALIFITVGIGFKLSLA), 295–315 (WHLLLEILAILSMIVGNLIAI), 323–343 (MLAYSSIGQIGYVIIGIIVGD), 354–374 (YMLFYISMNLGTFACIVLFGL), 395–415 (ALSLALCLLSLGGLPPLAGFF), 418–438 (LHLFWCGWQAGLYFLVLIGLL), and 482–502 (LSMIVCVIASTIPGISMNPIV).

Belongs to the complex I subunit 2 family. As to quaternary structure, NDH is composed of at least 16 different subunits, 5 of which are encoded in the nucleus.

The protein resides in the plastid. Its subcellular location is the chloroplast thylakoid membrane. It catalyses the reaction a plastoquinone + NADH + (n+1) H(+)(in) = a plastoquinol + NAD(+) + n H(+)(out). It carries out the reaction a plastoquinone + NADPH + (n+1) H(+)(in) = a plastoquinol + NADP(+) + n H(+)(out). Functionally, NDH shuttles electrons from NAD(P)H:plastoquinone, via FMN and iron-sulfur (Fe-S) centers, to quinones in the photosynthetic chain and possibly in a chloroplast respiratory chain. The immediate electron acceptor for the enzyme in this species is believed to be plastoquinone. Couples the redox reaction to proton translocation, and thus conserves the redox energy in a proton gradient. The chain is NAD(P)H-quinone oxidoreductase subunit 2 B, chloroplastic from Manihot esculenta (Cassava).